The sequence spans 337 residues: Ketol-acid reductoisomerase (NAD(P)(+)) (337 aa).

The region spanning 2-187 (ARMFYDADAN…GCTRAGVIET (186 aa)) is the KARI N-terminal Rossmann domain. Residues 25–28 (FGSQ), Arg48, and 88–91 (DEVQ) contribute to the NADP(+) site. His113 is an active-site residue. Position 139 (Gly139) interacts with NADP(+). The 146-residue stretch at 188–333 (SFQEETETDL…AELRGMMPWL (146 aa)) folds into the KARI C-terminal knotted domain. Positions 196, 200, 232, and 236 each coordinate Mg(2+). Ser257 is a substrate binding site.

This sequence belongs to the ketol-acid reductoisomerase family. It depends on Mg(2+) as a cofactor.

It catalyses the reaction (2R)-2,3-dihydroxy-3-methylbutanoate + NAD(+) = (2S)-2-acetolactate + NADH + H(+). The enzyme catalyses (2R)-2,3-dihydroxy-3-methylbutanoate + NADP(+) = (2S)-2-acetolactate + NADPH + H(+). The protein operates within amino-acid biosynthesis; L-isoleucine biosynthesis; L-isoleucine from 2-oxobutanoate: step 2/4. Its pathway is amino-acid biosynthesis; L-valine biosynthesis; L-valine from pyruvate: step 2/4. In terms of biological role, involved in the biosynthesis of branched-chain amino acids (BCAA). Catalyzes an alkyl-migration followed by a ketol-acid reduction of (S)-2-acetolactate (S2AL) to yield (R)-2,3-dihydroxy-isovalerate. In the isomerase reaction, S2AL is rearranged via a Mg-dependent methyl migration to produce 3-hydroxy-3-methyl-2-ketobutyrate (HMKB). In the reductase reaction, this 2-ketoacid undergoes a metal-dependent reduction by NADPH or NADH to yield (R)-2,3-dihydroxy-isovalerate. In Syntrophomonas wolfei subsp. wolfei (strain DSM 2245B / Goettingen), this protein is Ketol-acid reductoisomerase (NAD(P)(+)).